The following is a 195-amino-acid chain: Imidazoleglycerol-phosphate dehydratase (195 aa).

It belongs to the imidazoleglycerol-phosphate dehydratase family.

The protein localises to the cytoplasm. The enzyme catalyses D-erythro-1-(imidazol-4-yl)glycerol 3-phosphate = 3-(imidazol-4-yl)-2-oxopropyl phosphate + H2O. It participates in amino-acid biosynthesis; L-histidine biosynthesis; L-histidine from 5-phospho-alpha-D-ribose 1-diphosphate: step 6/9. The protein is Imidazoleglycerol-phosphate dehydratase of Thermotoga maritima (strain ATCC 43589 / DSM 3109 / JCM 10099 / NBRC 100826 / MSB8).